The primary structure comprises 132 residues: MVMTDPIADFLTRIRNGNMRKFDVVEAPASKIKRQIAEILKAEGYVKDVEYVEDNKQGVIRVFLKYGKNGEKVITNLKRISKPGLRVYVKSDDVPKVLNGLGTAIISTSTGVVTDKVARQTNVGGEVIAYIW.

It belongs to the universal ribosomal protein uS8 family. In terms of assembly, part of the 30S ribosomal subunit. Contacts proteins S5 and S12.

One of the primary rRNA binding proteins, it binds directly to 16S rRNA central domain where it helps coordinate assembly of the platform of the 30S subunit. The chain is Small ribosomal subunit protein uS8 from Lactococcus lactis subsp. cremoris (strain MG1363).